A 453-amino-acid chain; its full sequence is MNNTSITGPQVLHRTKMRPLPVLEKYCISPHHGFLDDRLPLTRLSSKKYMKWEEIVADLPSLLQEDNKVRSVIDGLDVLDLDETILGDVRELRRAYSILGFMAHAYIWASGTPRDVLPECIARPLLETAHILGVPPLATYSSLVLWNFKVTDECKKTETGCLDLENITTINTFTGTVDESWFYLVSVRFEKIGSACLNHGLQILRAIRSGDKGDANVIDGLEGLAATIERLSKALMEMELKCEPNVFYFKIRPFLAGWTNMSHMGLPQGVRYGAEGQYRIFSGGSNAQSSLIQTLDILLGVKHTANAAHSSQGDSKINYLDEMKKYMPREHREFLYHLESVCNIREYVSRNASNRALQEAYGRCISMLKIFRDNHIQIVTKYIILPSNSKQHGSNKPNVLSPIEPNTKASGCLGHKVASSKTIGTGGTRLMPFLKQCRDETVATADIKNEDKN.

A heme-binding site is contributed by H331.

Belongs to the indoleamine 2,3-dioxygenase family. The cofactor is heme.

It carries out the reaction D-tryptophan + O2 = N-formyl-D-kynurenine. The enzyme catalyses L-tryptophan + O2 = N-formyl-L-kynurenine. It functions in the pathway cofactor biosynthesis; NAD(+) biosynthesis. Catalyzes the first step in tryptophan catabolism in order to supply de novo nicotinamide adenine dinucleotide (NAD(+)) via the kynurenine pathway. Plays a role in the cellular response to telomere uncapping. The protein is Indoleamine 2,3-dioxygenase (BNA2) of Saccharomyces cerevisiae (strain ATCC 204508 / S288c) (Baker's yeast).